The sequence spans 86 residues: Cell division topological specificity factor (86 aa).

It belongs to the MinE family.

Prevents the cell division inhibition by proteins MinC and MinD at internal division sites while permitting inhibition at polar sites. This ensures cell division at the proper site by restricting the formation of a division septum at the midpoint of the long axis of the cell. This Rhizobium etli (strain ATCC 51251 / DSM 11541 / JCM 21823 / NBRC 15573 / CFN 42) protein is Cell division topological specificity factor.